Reading from the N-terminus, the 298-residue chain is HTH-type transcriptional regulator YhaJ (298 aa).

The HTH lysR-type domain occupies 7–64; it reads LTLEALRVMDAIDRRGSFAAAADELGRVPSALSYTMQKLEEELDVVLFDRSGHRTKFT. The H-T-H motif DNA-binding region spans 24–43; sequence FAAAADELGRVPSALSYTMQ.

This sequence belongs to the LysR transcriptional regulatory family.

Positive regulator partially required for expression of genes in the locus of effacement (LEE) large pathogenicity island (PAI). Also partially responsible for expression of neighboring gene dlsT (yhaO) during late exponential growth. Binds to DNA of promoter 1 in LEE and DNA from the dlsT promoter region. The protein is HTH-type transcriptional regulator YhaJ (yhaJ) of Escherichia coli O157:H7.